We begin with the raw amino-acid sequence, 382 residues long: ATP phosphoribosyltransferase regulatory subunit (382 aa).

Belongs to the class-II aminoacyl-tRNA synthetase family. HisZ subfamily. Heteromultimer composed of HisG and HisZ subunits.

The protein localises to the cytoplasm. It functions in the pathway amino-acid biosynthesis; L-histidine biosynthesis; L-histidine from 5-phospho-alpha-D-ribose 1-diphosphate: step 1/9. In terms of biological role, required for the first step of histidine biosynthesis. May allow the feedback regulation of ATP phosphoribosyltransferase activity by histidine. This Verminephrobacter eiseniae (strain EF01-2) protein is ATP phosphoribosyltransferase regulatory subunit.